The sequence spans 620 residues: UDP-glucose:protein N-beta-glucosyltransferase (620 aa).

Belongs to the glycosyltransferase 41 family.

The protein resides in the cytoplasm. The enzyme catalyses L-asparaginyl-[protein] + UDP-alpha-D-glucose = N(4)-(beta-D-glucosyl)-L-asparaginyl-[protein] + UDP + H(+). The protein operates within protein modification; protein glycosylation. Its function is as follows. Inverting glycosyltransferase that catalyzes the transfer of one glucose moiety from UDP-glucose to an asparagine residue in peptides and proteins containing the NX(S/T) motif, resulting in their modification with a beta-linked 1,N-glucose. Likely acts as a key component of a general protein glycosylation system. The chain is UDP-glucose:protein N-beta-glucosyltransferase from Actinobacillus pleuropneumoniae serotype 5b (strain L20).